A 547-amino-acid polypeptide reads, in one-letter code: Delta-guaiene synthase 3 (547 aa).

Mg(2+) contacts are provided by D299, D303, and D444. A DDXXD motif motif is present at residues 299–303 (DDTYD).

The protein belongs to the terpene synthase family. Mg(2+) serves as cofactor.

It carries out the reaction (2E,6E)-farnesyl diphosphate = delta-guaiene + diphosphate. It catalyses the reaction (2E,6E)-farnesyl diphosphate = alpha-guaiene + diphosphate. It functions in the pathway secondary metabolite biosynthesis; terpenoid biosynthesis. Its function is as follows. Sesquiterpene synthase involved in the biosynthesis of delta-guaiene (78.2%) and alpha-guaiene (20.9%), two structures composed of five- and seven-membered rings. Also produces 0.9% of alpha-humulene. The polypeptide is Delta-guaiene synthase 3 (C4) (Aquilaria crassna (Eagle wood)).